Consider the following 738-residue polypeptide: NAD(P)H-quinone oxidoreductase subunit 5, chloroplastic (738 aa).

The next 17 membrane-spanning stretches (helical) occupy residues 9–29 (WIIP…LLLF), 39–59 (IWAF…VILS), 89–109 (IDPL…MVLI), 125–145 (FAYM…SNLI), 147–167 (IYIF…FWFT), 185–205 (GDFS…SFEF), 224–244 (FFLT…SAQF), 258–278 (TPIS…FLVA), 280–300 (LFPL…VGII), 327–347 (LGYI…FHLI), 396–416 (TSFL…CFWS), 425–445 (WLYS…TAFY), 544–564 (MLFP…IGIL), 600–620 (FLIN…IALF), 667–687 (IFYA…TYFF), 694–714 (GIVN…KYVG), and 718–738 (ISSY…ICLN).

It belongs to the complex I subunit 5 family. As to quaternary structure, NDH is composed of at least 16 different subunits, 5 of which are encoded in the nucleus.

Its subcellular location is the plastid. The protein localises to the chloroplast thylakoid membrane. It catalyses the reaction a plastoquinone + NADH + (n+1) H(+)(in) = a plastoquinol + NAD(+) + n H(+)(out). The catalysed reaction is a plastoquinone + NADPH + (n+1) H(+)(in) = a plastoquinol + NADP(+) + n H(+)(out). Functionally, NDH shuttles electrons from NAD(P)H:plastoquinone, via FMN and iron-sulfur (Fe-S) centers, to quinones in the photosynthetic chain and possibly in a chloroplast respiratory chain. The immediate electron acceptor for the enzyme in this species is believed to be plastoquinone. Couples the redox reaction to proton translocation, and thus conserves the redox energy in a proton gradient. The sequence is that of NAD(P)H-quinone oxidoreductase subunit 5, chloroplastic (ndhF) from Ranunculus macranthus (Large buttercup).